Here is a 256-residue protein sequence, read N- to C-terminus: Acetyl-coenzyme A carboxylase carboxyl transferase subunit alpha (256 aa).

The CoA carboxyltransferase C-terminal domain occupies 1 to 236 (MTDVSRVLKE…KANLIEQITS (236 aa)).

It belongs to the AccA family. In terms of assembly, acetyl-CoA carboxylase is a heterohexamer composed of biotin carboxyl carrier protein (AccB), biotin carboxylase (AccC) and two subunits each of ACCase subunit alpha (AccA) and ACCase subunit beta (AccD).

The protein resides in the cytoplasm. It carries out the reaction N(6)-carboxybiotinyl-L-lysyl-[protein] + acetyl-CoA = N(6)-biotinyl-L-lysyl-[protein] + malonyl-CoA. It participates in lipid metabolism; malonyl-CoA biosynthesis; malonyl-CoA from acetyl-CoA: step 1/1. Functionally, component of the acetyl coenzyme A carboxylase (ACC) complex. First, biotin carboxylase catalyzes the carboxylation of biotin on its carrier protein (BCCP) and then the CO(2) group is transferred by the carboxyltransferase to acetyl-CoA to form malonyl-CoA. The sequence is that of Acetyl-coenzyme A carboxylase carboxyl transferase subunit alpha from Streptococcus pyogenes serotype M12 (strain MGAS2096).